The chain runs to 320 residues: Solute carrier family 35 member B1 (320 aa).

8 helical membrane-spanning segments follow: residues 9–29 (GLRLLVCFLGVFVCYFYYGIL), 49–69 (FALSLVFVQCIVNALFAKLLI), 81–103 (QSWLYSACSLSYLGAMVSSNSAL), 134–154 (YPLTKYLCVLLIVFGVALFMY), 166–186 (TVGYGELLLLLSLTLDGLTGV), 202–222 (MMLSINLWSSLFLGAGIVLTG), 241–261 (IVLFSLTSALGQTFIFMTVVY), and 283–303 (VILFSNPISSIQWVGTLLVFL). The Di-lysine motif motif lies at 316 to 320 (KKPSH).

The protein belongs to the nucleotide-sugar transporter family. SLC35B subfamily.

The protein localises to the endoplasmic reticulum membrane. Functionally, probable sugar transporter. The polypeptide is Solute carrier family 35 member B1 (slc35b1) (Xenopus laevis (African clawed frog)).